A 659-amino-acid chain; its full sequence is MRGFASSASRIATAAAASKSLNASTSVNPKLSKTLNSSGKPTNPLNQRYISQVIERKDWFLILNQEFTTHRIGLNTRFVISVLQNQDNPLHSLRFYLWVSNFDPVYAKDQSLKSVLGNALFRKGPLLLSMELLKEIRDSGYRISDELMCVLIGSWGRLGLAKYCNDVFAQISFLGMKPSTRLYNAVIDALVKSNSLDLAYLKFQQMRSDGCKPDRFTYNILIHGVCKKGVVDEAIRLVKQMEQEGNRPNVFTYTILIDGFLIAGRVDEALKQLEMMRVRKLNPNEATIRTFVHGIFRCLPPCKAFEVLVGFMEKDSNLQRVGYDAVLYCLSNNSMAKETGQFLRKIGERGYIPDSSTFNAAMSCLLKGHDLVETCRIFDGFVSRGVKPGFNGYLVLVQALLNAQRFSEGDRYLKQMGVDGLLSSVYSYNAVIDCLCKARRIENAAMFLTEMQDRGISPNLVTFNTFLSGYSVRGDVKKVHGVLEKLLVHGFKPDVITFSLIINCLCRAKEIKDAFDCFKEMLEWGIEPNEITYNILIRSCCSTGDTDRSVKLFAKMKENGLSPDLYAYNATIQSFCKMRKVKKAEELLKTMLRIGLKPDNFTYSTLIKALSESGRESEAREMFSSIERHGCVPDSYTKRLVEELDLRKSGLSRETVSAS.

A mitochondrion-targeting transit peptide spans 1–32 (MRGFASSASRIATAAAASKSLNASTSVNPKLS). PPR repeat units follow at residues 109–143 (DQSL…GYRI), 144–178 (SDEL…GMKP), 179–213 (STRL…GCKP), 214–248 (DRFT…GNRP), 249–283 (NVFT…KLNP), 284–318 (NEAT…DSNL), 319–353 (QRVG…GYIP), 354–388 (DSST…GVKP), 389–423 (GFNG…GLLS), 424–458 (SVYS…GISP), 459–493 (NLVT…GFKP), 494–528 (DVIT…GIEP), 529–563 (NEIT…GLSP), 564–598 (DLYA…GLKP), and 599–633 (DNFT…GCVP).

Belongs to the PPR family. P subfamily.

It localises to the mitochondrion. Functionally, required for the ubiquinol-cytochrome c oxidoreductase activity of mitochondrial complex III. In Arabidopsis thaliana (Mouse-ear cress), this protein is Putative pentatricopeptide repeat-containing protein At3g16890, mitochondrial (PPR40).